A 619-amino-acid polypeptide reads, in one-letter code: DNA mismatch repair protein MutL (619 aa).

Residues 364-375 (EPASAREPAAPR) are compositionally biased toward low complexity. Residues 364-399 (EPASAREPAAPRYSTSSGATGGRQPAASWPHAQPGY) form a disordered region.

Belongs to the DNA mismatch repair MutL/HexB family.

Its function is as follows. This protein is involved in the repair of mismatches in DNA. It is required for dam-dependent methyl-directed DNA mismatch repair. May act as a 'molecular matchmaker', a protein that promotes the formation of a stable complex between two or more DNA-binding proteins in an ATP-dependent manner without itself being part of a final effector complex. The sequence is that of DNA mismatch repair protein MutL from Citrobacter koseri (strain ATCC BAA-895 / CDC 4225-83 / SGSC4696).